Consider the following 423-residue polypeptide: Maintenance of mitochondrial morphology protein 1 (423 aa).

The Lumenal portion of the chain corresponds to 1-15 (MWLDDVASELSFTQG). A helical transmembrane segment spans residues 16 to 36 (LLLGQLSIVILIGAFIKFFIF). Over 37 to 423 (GDPPSPDVSA…PGSMPGLSMA (387 aa)) the chain is Cytoplasmic. The 213-residue stretch at 110 to 322 (QPESLDWFNV…EPRFQQIELP (213 aa)) folds into the SMP-LTD domain. Disordered stretches follow at residues 327–370 (RKKN…EAET) and 394–423 (SEEGLRFRRRSRGRGDEYAMPGSMPGLSMA). The segment covering 350 to 367 (RSRDVERDLREEARKEVE) has biased composition (basic and acidic residues).

The protein belongs to the MMM1 family. Homodimer. Component of the ER-mitochondria encounter structure (ERMES) or MDM complex, composed of mmm1, mdm10, mdm12 and mdm34. A mmm1 homodimer associates with one molecule of mdm12 on each side in a pairwise head-to-tail manner, and the SMP-LTD domains of mmm1 and mdm12 generate a continuous hydrophobic tunnel for phospholipid trafficking.

Its subcellular location is the endoplasmic reticulum membrane. Functionally, component of the ERMES/MDM complex, which serves as a molecular tether to connect the endoplasmic reticulum (ER) and mitochondria. Components of this complex are involved in the control of mitochondrial shape and protein biogenesis, and function in nonvesicular lipid trafficking between the ER and mitochondria. The mdm12-mmm1 subcomplex functions in the major beta-barrel assembly pathway that is responsible for biogenesis of all outer membrane beta-barrel proteins, and acts in a late step after the SAM complex. The mdm10-mdm12-mmm1 subcomplex further acts in the TOM40-specific pathway after the action of the mdm12-mmm1 complex. Essential for establishing and maintaining the structure of mitochondria and maintenance of mtDNA nucleoids. The polypeptide is Maintenance of mitochondrial morphology protein 1 (Sclerotinia sclerotiorum (strain ATCC 18683 / 1980 / Ss-1) (White mold)).